We begin with the raw amino-acid sequence, 323 residues long: Phosphoribosylaminoimidazole-succinocarboxamide synthase (323 aa).

Belongs to the SAICAR synthetase family.

The enzyme catalyses 5-amino-1-(5-phospho-D-ribosyl)imidazole-4-carboxylate + L-aspartate + ATP = (2S)-2-[5-amino-1-(5-phospho-beta-D-ribosyl)imidazole-4-carboxamido]succinate + ADP + phosphate + 2 H(+). The protein operates within purine metabolism; IMP biosynthesis via de novo pathway; 5-amino-1-(5-phospho-D-ribosyl)imidazole-4-carboxamide from 5-amino-1-(5-phospho-D-ribosyl)imidazole-4-carboxylate: step 1/2. In Azobacteroides pseudotrichonymphae genomovar. CFP2, this protein is Phosphoribosylaminoimidazole-succinocarboxamide synthase.